Here is a 229-residue protein sequence, read N- to C-terminus: Large ribosomal subunit protein uL1 (229 aa).

This sequence belongs to the universal ribosomal protein uL1 family. As to quaternary structure, part of the 50S ribosomal subunit.

Binds directly to 23S rRNA. The L1 stalk is quite mobile in the ribosome, and is involved in E site tRNA release. Its function is as follows. Protein L1 is also a translational repressor protein, it controls the translation of the L11 operon by binding to its mRNA. In Pelagibacter ubique (strain HTCC1062), this protein is Large ribosomal subunit protein uL1.